We begin with the raw amino-acid sequence, 467 residues long: Glutamate--tRNA ligase (467 aa).

The 'HIGH' region motif lies at 9 to 19 (PSPTGYLHIGG). Positions 237-241 (KLSKR) match the 'KMSKS' region motif. Lysine 240 serves as a coordination point for ATP.

Belongs to the class-I aminoacyl-tRNA synthetase family. Glutamate--tRNA ligase type 1 subfamily. As to quaternary structure, monomer.

It localises to the cytoplasm. The enzyme catalyses tRNA(Glu) + L-glutamate + ATP = L-glutamyl-tRNA(Glu) + AMP + diphosphate. Its function is as follows. Catalyzes the attachment of glutamate to tRNA(Glu) in a two-step reaction: glutamate is first activated by ATP to form Glu-AMP and then transferred to the acceptor end of tRNA(Glu). In Xylella fastidiosa (strain M23), this protein is Glutamate--tRNA ligase.